Consider the following 160-residue polypeptide: Ribosomal RNA large subunit methyltransferase H (160 aa).

Residues Leu-76 and Gly-108 each coordinate S-adenosyl-L-methionine.

It belongs to the RNA methyltransferase RlmH family. Homodimer.

The protein localises to the cytoplasm. It catalyses the reaction pseudouridine(1915) in 23S rRNA + S-adenosyl-L-methionine = N(3)-methylpseudouridine(1915) in 23S rRNA + S-adenosyl-L-homocysteine + H(+). Its function is as follows. Specifically methylates the pseudouridine at position 1915 (m3Psi1915) in 23S rRNA. This Rhodopseudomonas palustris (strain TIE-1) protein is Ribosomal RNA large subunit methyltransferase H.